A 218-amino-acid polypeptide reads, in one-letter code: Peroxiredoxin-like 2A (218 aa).

Residues 3 to 101 (MWSIGVGAVG…DELGVPLYAV (99 aa)) are thioredoxin-like fold. Catalysis depends on redox-active residues C74 and C77.

Belongs to the peroxiredoxin-like PRXL2 family. PRXL2A subfamily. As to expression, expressed in kidney, liver, skin, and brain. Widely expressed with highest levels detected in adipose tissue.

It is found in the cytoplasm. The protein localises to the secreted. Functionally, involved in redox regulation of the cell. Acts as an antioxidant. Inhibits TNFSF11-induced NFKB1 and JUN activation and osteoclast differentiation. May affect bone resorption and help to maintain bone mass. Acts as a negative regulator of macrophage-mediated inflammation by inhibiting macrophage production of inflammatory cytokines, probably through suppression of the MAPK signaling pathway. This chain is Peroxiredoxin-like 2A (Prxl2a), found in Mus musculus (Mouse).